Reading from the N-terminus, the 333-residue chain is Salivary glue protein Sgs-3 (333 aa).

The N-terminal stretch at 1–23 is a signal peptide; it reads MKLTIATALVGILLIACAHVANG. The segment at 51-285 is disordered; sequence TCRPPTTTRC…ATARPTSKPC (235 aa). The span at 60–73 shows a compositional bias: pro residues; the sequence is CPPPTTTRCPPPTR. The segment covering 74-88 has biased composition (low complexity); it reads PAECTATTKRPTARP. The span at 89 to 277 shows a compositional bias: basic residues; it reads TTKRATTRRT…TKRATTKRAT (189 aa).

The chain is Salivary glue protein Sgs-3 (Sgs3) from Drosophila erecta (Fruit fly).